A 231-amino-acid chain; its full sequence is Phosphoribosylformylglycinamidine synthase subunit PurQ (231 aa).

Positions 7–231 constitute a Glutamine amidotransferase type-1 domain; the sequence is GVVVFPGSNC…RLFASLFRQL (225 aa). The active-site Nucleophile is the C89. Active-site residues include H206 and E208.

In terms of assembly, part of the FGAM synthase complex composed of 1 PurL, 1 PurQ and 2 PurS subunits.

It is found in the cytoplasm. It catalyses the reaction N(2)-formyl-N(1)-(5-phospho-beta-D-ribosyl)glycinamide + L-glutamine + ATP + H2O = 2-formamido-N(1)-(5-O-phospho-beta-D-ribosyl)acetamidine + L-glutamate + ADP + phosphate + H(+). The enzyme catalyses L-glutamine + H2O = L-glutamate + NH4(+). It functions in the pathway purine metabolism; IMP biosynthesis via de novo pathway; 5-amino-1-(5-phospho-D-ribosyl)imidazole from N(2)-formyl-N(1)-(5-phospho-D-ribosyl)glycinamide: step 1/2. Part of the phosphoribosylformylglycinamidine synthase complex involved in the purines biosynthetic pathway. Catalyzes the ATP-dependent conversion of formylglycinamide ribonucleotide (FGAR) and glutamine to yield formylglycinamidine ribonucleotide (FGAM) and glutamate. The FGAM synthase complex is composed of three subunits. PurQ produces an ammonia molecule by converting glutamine to glutamate. PurL transfers the ammonia molecule to FGAR to form FGAM in an ATP-dependent manner. PurS interacts with PurQ and PurL and is thought to assist in the transfer of the ammonia molecule from PurQ to PurL. This chain is Phosphoribosylformylglycinamidine synthase subunit PurQ, found in Chlorobium luteolum (strain DSM 273 / BCRC 81028 / 2530) (Pelodictyon luteolum).